A 201-amino-acid polypeptide reads, in one-letter code: ATP-dependent Clp protease proteolytic subunit (201 aa).

The Nucleophile role is filled by Ser98. The active site involves His123.

The protein belongs to the peptidase S14 family. In terms of assembly, fourteen ClpP subunits assemble into 2 heptameric rings which stack back to back to give a disk-like structure with a central cavity, resembling the structure of eukaryotic proteasomes.

It is found in the cytoplasm. It carries out the reaction Hydrolysis of proteins to small peptides in the presence of ATP and magnesium. alpha-casein is the usual test substrate. In the absence of ATP, only oligopeptides shorter than five residues are hydrolyzed (such as succinyl-Leu-Tyr-|-NHMec, and Leu-Tyr-Leu-|-Tyr-Trp, in which cleavage of the -Tyr-|-Leu- and -Tyr-|-Trp bonds also occurs).. In terms of biological role, cleaves peptides in various proteins in a process that requires ATP hydrolysis. Has a chymotrypsin-like activity. Plays a major role in the degradation of misfolded proteins. This chain is ATP-dependent Clp protease proteolytic subunit, found in Rickettsia peacockii (strain Rustic).